The chain runs to 96 residues: Large ribosomal subunit protein uL23 (96 aa).

Belongs to the universal ribosomal protein uL23 family. As to quaternary structure, part of the 50S ribosomal subunit. Contacts protein L29, and trigger factor when it is bound to the ribosome.

Its function is as follows. One of the early assembly proteins it binds 23S rRNA. One of the proteins that surrounds the polypeptide exit tunnel on the outside of the ribosome. Forms the main docking site for trigger factor binding to the ribosome. The protein is Large ribosomal subunit protein uL23 of Thermus thermophilus (strain ATCC BAA-163 / DSM 7039 / HB27).